A 498-amino-acid chain; its full sequence is RuvB-like helicase 2 (498 aa).

Residue 79 to 86 (GPPSTGKT) coordinates ATP. The interval 458-498 (VTIGQESTDGSTQPQAKQQEVAQPEATQPQSQPEDDKMETD) is disordered. The span at 461–489 (GQESTDGSTQPQAKQQEVAQPEATQPQSQ) shows a compositional bias: polar residues.

The protein belongs to the RuvB family. As to quaternary structure, may form heterododecamers with RVB1. Component of the SWR1 chromatin remodeling complex, the INO80 chromatin remodeling complex, and of the R2TP complex.

It localises to the nucleus. It carries out the reaction ATP + H2O = ADP + phosphate + H(+). DNA helicase which participates in several chromatin remodeling complexes, including the SWR1 and the INO80 complexes. The SWR1 complex mediates the ATP-dependent exchange of histone H2A for the H2A variant HZT1 leading to transcriptional regulation of selected genes by chromatin remodeling. The INO80 complex remodels chromatin by shifting nucleosomes and is involved in DNA repair. Also involved in pre-rRNA processing. In Candida albicans (strain SC5314 / ATCC MYA-2876) (Yeast), this protein is RuvB-like helicase 2 (RVB2).